The sequence spans 258 residues: uncharacterized protein (258 aa).

A run of 3 helical transmembrane segments spans residues 38-58, 72-92, and 111-131; these read VFGLLIALICFSNVLCFLFIA, ALIFTLFIPFVTSLLANIIFI, and FLVICAFSSLPIVNIWLMLWW.

It is found in the cell membrane. This is an uncharacterized protein from Mycoplasma pneumoniae (strain ATCC 29342 / M129 / Subtype 1) (Mycoplasmoides pneumoniae).